Here is a 780-residue protein sequence, read N- to C-terminus: MAPYRSSLLCALLLLALCALSPSHAATTSRGRAQERAPQSRVSEARPSTMVVEHPEFLKAGKEPGLQIWRVEKFDLVPVPPNLYGDFFTGDAYVILKTVQLRNGNLQYDLHYWLGNECSQDESGAAAIFTVQLDDYLNGRAVQHREVQGFESSTFSGYFKSGLKYKKGGVASGFKHVVPNEVVVQRLFQVKGRRVVRATEVPVSWDSFNNGDCFILDLGNNIYQWCGSGSNKFERLKATQVSKGIRDNERSGRAQVHVSEEGGEPEAMLQVLGPKPALPEGTEDTAKEDAANRRLAKLYKVSNGAGSMSVSLVADENPFAQGALRSEDCFILDHGRDGKIFVWKGKQANMEERKAALKTASDFISKMQYPRQTQVSVLPEGGETPLFKQFFKNWRDPDQTDGPGLGYLSSHIANVERVPFDAATLHTSTAMAAQHGMDDDGTGQKQIWRIEGSNKVPVDPATYGQFYGGDSYIILYNYRHGGRQGQIIYNWQGAQSTQDEVAASAILTAQLDEELGGTPVQSRVVQGKEPAHLMSLFGGKPMIIYKGGTSRDGGQTAPASIRLFQVRASSSGATRAVEVMPKSGALNSNDAFVLKTPSAAYLWVGAGASEAEKTGAQELLKVLRSQHVQVEEGSEPDAFWEALGGKTAYRTSPRLKDKKMDAHPPRLFACSNRIGRFVIEEVPGELMQEDLATDDVMLLDTWDQVFVWVGKDSQEEEKTEALTSAKRYIETDPANRDRRTPITVVRQGFEPPSFVGWFLGWDDNYWSVDPLDRALAELAA.

The residue at position 1 (M1) is an N-acetylmethionine; alternate. The first 25 residues, 1–25 (MAPYRSSLLCALLLLALCALSPSHA), serve as a signal peptide directing secretion. The actin-severing stretch occupies residues 51–174 (VVEHPEFLKA…YKKGGVASGF (124 aa)). One copy of the Gelsolin-like 1 repeat lies at 74–155 (FDLVPVPPNL…EVQGFESSTF (82 aa)). Phosphotyrosine is present on Y84. Ca(2+)-binding residues include G90, D91, E122, D134, G139, and A141. An actin-actin interfilament contact point region spans residues 121-124 (DESG). Position 160 to 167 (160 to 167 (KSGLKYKK)) interacts with a 1,2-diacyl-sn-glycero-3-phospho-(1D-myo-inositol-4,5-bisphosphate). V170 provides a ligand contact to Ca(2+). Position 186-194 (186-194 (RLFQVKGRR)) interacts with a 1,2-diacyl-sn-glycero-3-phospho-(1D-myo-inositol-4,5-bisphosphate). One copy of the Gelsolin-like 2 repeat lies at 196–268 (VRATEVPVSW…SEEGGEPEAM (73 aa)). Ca(2+) contacts are provided by G211 and D212. C213 and C226 are oxidised to a cystine. E234 provides a ligand contact to Ca(2+). A disordered region spans residues 244–269 (GIRDNERSGRAQVHVSEEGGEPEAML). Positions 284, 327, 328, and 352 each coordinate Ca(2+). A Gelsolin-like 3 repeat occupies 315 to 387 (DENPFAQGAL…LPEGGETPLF (73 aa)). Phosphotyrosine occurs at positions 407 and 463. The interval 432–780 (AAQHGMDDDG…LDRALAELAA (349 aa)) is actin-binding, Ca-sensitive. The stretch at 453–534 (SNKVPVDPAT…VQGKEPAHLM (82 aa)) is one Gelsolin-like 4 repeat. 7 residues coordinate Ca(2+): G469, D470, E500, D512, G517, P519, and T549. A Gelsolin-like 5 repeat occupies 575–640 (RAVEVMPKSG…EEGSEPDAFW (66 aa)). Residue K582 is modified to N6-acetyllysine. Ca(2+)-binding residues include N589 and D590. Y601 carries the post-translational modification Phosphotyrosine. E612 contributes to the Ca(2+) binding site. Position 649 is a phosphotyrosine (Y649). A Gelsolin-like 6 repeat occupies 679-754 (IEEVPGELMQ…VRQGFEPPSF (76 aa)). 3 residues coordinate Ca(2+): D694, D695, and E717. A Phosphothreonine modification is found at T740.

The protein belongs to the villin/gelsolin family. Binds to actin and to fibronectin. Identified in a complex composed of ACTA1, COBL, GSN and TMSB4X. Interacts with the inactive form of EIF2AK2/PKR. Interacts with FLII. Post-translationally, phosphorylated on tyrosine residues in vitro.

It localises to the cytoplasm. Its subcellular location is the cytoskeleton. The protein localises to the secreted. Functionally, calcium-regulated, actin-modulating protein that binds to the plus (or barbed) ends of actin monomers or filaments, preventing monomer exchange (end-blocking or capping). It can promote the assembly of monomers into filaments (nucleation) as well as sever filaments already formed. Plays a role in ciliogenesis. This is Gelsolin (Gsn) from Mus musculus (Mouse).